Consider the following 954-residue polypeptide: Mitogen-activated protein kinase kinase kinase 10 (954 aa).

An SH3 domain is found at 16 to 81; it reads PAGPVWTAVF…PSNYVAPGAP (66 aa). The 263-residue stretch at 98–360 folds into the Protein kinase domain; it reads LQLEEIIGVG…GSILKRLEVI (263 aa). Residues 104-112 and lysine 125 each bind ATP; that span reads IGVGGFGKV. Aspartate 222 serves as the catalytic Proton acceptor. Threonine 258 is modified (phosphothreonine; by autocatalysis). Serine 262 bears the Phosphoserine; by autocatalysis and MAP4K1 mark. Leucine-zipper regions lie at residues 384–405 and 419–440; these read IQHM…EEEL and LRRR…ELHL. Disordered stretches follow at residues 490–665, 716–739, and 757–954; these read PTLD…RWGH, RFPR…PGLG, and STRS…HGSH. Serine 498, serine 502, and serine 506 each carry phosphoserine. A compositionally biased stretch (low complexity) spans 501–511; that stretch reads ASPPASPSIIP. Position 558 is a phosphothreonine (threonine 558). Residues 566–578 show a composition bias toward basic and acidic residues; sequence QKERVGGEERLKG. The span at 611–620 shows a compositional bias: acidic residues; it reads EMEEFAEAED. The segment covering 631–640 has biased composition (low complexity); that stretch reads STPSYLSVPL. A compositionally biased stretch (pro residues) spans 773 to 790; that stretch reads APSPPPSPPAPTPTPSPS. Residue arginine 857 is modified to Omega-N-methylarginine. A compositionally biased stretch (pro residues) spans 913 to 927; that stretch reads PSRPDTPESPGPPSV.

This sequence belongs to the protein kinase superfamily. STE Ser/Thr protein kinase family. MAP kinase kinase kinase subfamily. In terms of assembly, homodimer. Interacts with SH3RF2. It depends on Mg(2+) as a cofactor. Post-translationally, autophosphorylation on serine and threonine residues within the activation loop plays a role in enzyme activation. In terms of tissue distribution, expressed in brain and skeletal muscle.

It carries out the reaction L-seryl-[protein] + ATP = O-phospho-L-seryl-[protein] + ADP + H(+). The enzyme catalyses L-threonyl-[protein] + ATP = O-phospho-L-threonyl-[protein] + ADP + H(+). Its activity is regulated as follows. Homodimerization via the leucine zipper domains is required for autophosphorylation and subsequent activation. Its function is as follows. Activates the JUN N-terminal pathway. This is Mitogen-activated protein kinase kinase kinase 10 (MAP3K10) from Homo sapiens (Human).